The following is a 97-amino-acid chain: MALTKIELKNSLIEQGLNKLEAKKVVEGFFEQIRVSLENGEDVKLSGFGNFELRDKSSRPGRNPKTGEAIPVSARRVVVFRPGQKLRSRVEKTKPKN.

It belongs to the bacterial histone-like protein family. As to quaternary structure, heterodimer of an alpha and a beta chain.

Functionally, this protein is one of the two subunits of integration host factor, a specific DNA-binding protein that functions in genetic recombination as well as in transcriptional and translational control. This Histophilus somni (strain 2336) (Haemophilus somnus) protein is Integration host factor subunit alpha.